Here is a 558-residue protein sequence, read N- to C-terminus: Putative ABC transporter ATP-binding protein SAG1633 (558 aa).

ABC transporter domains follow at residues 5–246 and 295–527; these read IEWK…GIRE and LSVQ…THLK. Residues 39–46 and 328–335 contribute to the ATP site; these read GPSGSGKS and GKNGAGKS.

Belongs to the ABC transporter superfamily.

It is found in the cell membrane. Functionally, probably part of an ABC transporter complex. Responsible for energy coupling to the transport system. The sequence is that of Putative ABC transporter ATP-binding protein SAG1633 from Streptococcus agalactiae serotype V (strain ATCC BAA-611 / 2603 V/R).